A 239-amino-acid chain; its full sequence is 1-(5-phosphoribosyl)-5-[(5-phosphoribosylamino)methylideneamino] imidazole-4-carboxamide isomerase (239 aa).

D9 acts as the Proton acceptor in catalysis. The active-site Proton donor is D131.

It belongs to the HisA/HisF family.

It is found in the cytoplasm. It catalyses the reaction 1-(5-phospho-beta-D-ribosyl)-5-[(5-phospho-beta-D-ribosylamino)methylideneamino]imidazole-4-carboxamide = 5-[(5-phospho-1-deoxy-D-ribulos-1-ylimino)methylamino]-1-(5-phospho-beta-D-ribosyl)imidazole-4-carboxamide. It functions in the pathway amino-acid biosynthesis; L-histidine biosynthesis; L-histidine from 5-phospho-alpha-D-ribose 1-diphosphate: step 4/9. The chain is 1-(5-phosphoribosyl)-5-[(5-phosphoribosylamino)methylideneamino] imidazole-4-carboxamide isomerase from Bacteroides fragilis (strain YCH46).